A 190-amino-acid chain; its full sequence is Probable RNA-binding protein 18 (190 aa).

The RRM domain maps to 25–106 (HRLWIGNVDP…KKLVVRWAHA (82 aa)).

The sequence is that of Probable RNA-binding protein 18 (rbm18) from Xenopus laevis (African clawed frog).